A 681-amino-acid chain; its full sequence is Methionine--tRNA ligase (681 aa).

A 'HIGH' region motif is present at residues 12–22 (PYANGSIHLGH). The Zn(2+) site is built by Cys-143, Cys-146, Cys-156, and Cys-159. The 'KMSKS' region motif lies at 327 to 331 (KMSKS). Residue Lys-330 participates in ATP binding. The segment covering 545–557 (FEKSNPEKAKQDP) has biased composition (basic and acidic residues). Positions 545–566 (FEKSNPEKAKQDPSKSNTNEVK) are disordered. In terms of domain architecture, tRNA-binding spans 580 to 681 (ELSKVELRVG…RDASPGDLLK (102 aa)).

Belongs to the class-I aminoacyl-tRNA synthetase family. MetG type 1 subfamily. Homodimer. Zn(2+) is required as a cofactor.

The protein localises to the cytoplasm. The catalysed reaction is tRNA(Met) + L-methionine + ATP = L-methionyl-tRNA(Met) + AMP + diphosphate. Functionally, is required not only for elongation of protein synthesis but also for the initiation of all mRNA translation through initiator tRNA(fMet) aminoacylation. The protein is Methionine--tRNA ligase of Leptospira biflexa serovar Patoc (strain Patoc 1 / ATCC 23582 / Paris).